Reading from the N-terminus, the 1235-residue chain is MFSGGGGPLSPGGKSAARAASGFFVPAGPRGAGRGPPPCLRQNFYNPYLAPVGTQQKPTGPTQRHTYYSECDEFRFIAPRVLDEDAPPEKRAGVHDGHLKRAPKVYCGGDERDVLRVGSGGFWPRRSRLWGGVDHAPAGFNPTVTVFHVYDILENVEHAYGMRAAQFHARFMDAITPTGTVITLLGLTPEGHRVAVHVYGTRQYFYMNKEEVDRHLQCRAPRDLCERMAAALRESPGASFRGISADHFEAEVVERTDVYYYETRPALFYRVYVRSGRVLSYLCDNFCPAIKKYEGGVDATTRFILDNPGFVTFGWYRLKPGRNNTLAQPRVPMAFGTSSDVEFNCTADNLAIEGGMSDLPAYKLMCFDIECKAGGEDELAFPVAGHPEDLVIQISCLLYDLSTTALEHVLLFSLGSCDLPESHLTELAARGLPTPVVLEFDSEFEMLLAFMTLVKQYGPEFVTGYNIINFDWPFLLAKLTDIYKVPLDGYGRMNGRGVFRVWDIGQSHFQKRSKIKVNGMVNIDMYGIITDKIKLSSYKLNAVAEAVLKDKKKDLSYRDIPAYYAAGPAQRGVIGEYCIQDSLLVGQLFFKFLPHLELSAVARLAGINITRTIYDGQQIRVFTCLLRLADQKGFILPDTQGRFRGAGGEAPKRPAAAREDEERPEEEGEDEDEREEGGGEREPEGARETAGRHVGYQGARVLDPTSGFHVNPVVVFDFASLYPSIIQAHNLCFSTLSLRADAVAHLEAGKDYLEIEVGGRRLFFVKAHVRESLLSILLRDWLAMRKQIRSRIPQSSPEEAVLLDKQQAAIKVVCNSVYGFTGVQHGLLPCLHVAATVTTIGREMLLATREYVHARWAAFEQLLADFPEAADMRAPGPYSMRIIYGDTDSIFVLCRGLTAAGLTAVGDKMASHISRALFLPPIKLECEKTFTKLLLIAKKKYIGVIYGGKMLIKGVDLVRKNNCAFINRTSRALVDLLFYDDTVSGAAAALAERPAEEWLARPLPEGLQAFGAVLVDAHRRITDPERDIQDFVLTAELSRHPRAYTNKRLAHLTVYYKLMARRAQVPSIKDRIPYVIVAQTREVEETVARLAALRELDATAPGDEPAPPAALPCPAKRPRETPSHADPPGGASKPRKLLVSELAEDPAYAIAHGVALNTDYYFSHLLGVACVTFKALFGNNAKITESLLKRFIPEVWHPPDDVAARLRAAGFGAVGAGATAEETRRMLHRAFDTLA.

Disordered stretches follow at residues 640–692 (QGRF…TAGR) and 1098–1134 (ATAP…ASKP). Over residues 650–661 (APKRPAAAREDE) the composition is skewed to basic and acidic residues. Residues 662–675 (ERPEEEGEDEDERE) show a composition bias toward acidic residues. Basic and acidic residues predominate over residues 676 to 691 (EGGGEREPEGARETAG).

This sequence belongs to the DNA polymerase type-B family. Forms a complex with the ssDNA-binding protein UL29, the DNA polymerase processivity factor, and the alkaline exonuclease. Interacts with the putative helicase-primase complex subunit UL8; this interaction may coordinate leading and lagging strand DNA synthesis at the replication fork.

Its subcellular location is the host nucleus. The enzyme catalyses DNA(n) + a 2'-deoxyribonucleoside 5'-triphosphate = DNA(n+1) + diphosphate. The catalysed reaction is Endonucleolytic cleavage to 5'-phosphomonoester.. Its function is as follows. Replicates viral genomic DNA. The replication complex is composed of six viral proteins: the DNA polymerase, processivity factor, primase, primase-associated factor, helicase, and ssDNA-binding protein. Additionally, the polymerase contains an intrinsic ribonuclease H (RNase H) activity that specifically degrades RNA/DNA heteroduplexes or duplex DNA substrates in the 5' to 3' direction. Therefore, it can catalyze the excision of the RNA primers that initiate the synthesis of Okazaki fragments at a replication fork during viral DNA replication. This is DNA polymerase catalytic subunit from Human herpesvirus 1 (strain Angelotti) (HHV-1).